Consider the following 499-residue polypeptide: BTB/POZ domain-containing protein At5g60050 (499 aa).

The span at Pro18–Pro30 shows a compositional bias: low complexity. The disordered stretch occupies residues Pro18 to Thr57. The span at Pro38–Asn49 shows a compositional bias: pro residues. Residues Gly99–Leu172 form the BTB domain.

Its pathway is protein modification; protein ubiquitination. In terms of biological role, may act as a substrate-specific adapter of an E3 ubiquitin-protein ligase complex (CUL3-RBX1-BTB) which mediates the ubiquitination and subsequent proteasomal degradation of target proteins. This chain is BTB/POZ domain-containing protein At5g60050, found in Arabidopsis thaliana (Mouse-ear cress).